Reading from the N-terminus, the 195-residue chain is Protein GrpE (195 aa).

Positions 1 to 20 are enriched in basic and acidic residues; sequence MSSKEQKTPDEQVLDQKEAA. Positions 1-40 are disordered; that stretch reads MSSKEQKTPDEQVLDQKEAAKGQQADAAPETADVADPRDE.

It belongs to the GrpE family. In terms of assembly, homodimer.

The protein localises to the cytoplasm. In terms of biological role, participates actively in the response to hyperosmotic and heat shock by preventing the aggregation of stress-denatured proteins, in association with DnaK and GrpE. It is the nucleotide exchange factor for DnaK and may function as a thermosensor. Unfolded proteins bind initially to DnaJ; upon interaction with the DnaJ-bound protein, DnaK hydrolyzes its bound ATP, resulting in the formation of a stable complex. GrpE releases ADP from DnaK; ATP binding to DnaK triggers the release of the substrate protein, thus completing the reaction cycle. Several rounds of ATP-dependent interactions between DnaJ, DnaK and GrpE are required for fully efficient folding. The sequence is that of Protein GrpE from Pectobacterium atrosepticum (strain SCRI 1043 / ATCC BAA-672) (Erwinia carotovora subsp. atroseptica).